The primary structure comprises 384 residues: uncharacterized protein (384 aa).

10 consecutive transmembrane segments (helical) span residues 11–31 (LWFI…GISI), 33–53 (WMIG…AWLM), 66–86 (LALG…LSVL), 94–114 (FSVG…GYVL), 153–173 (LVQM…VILI), 197–217 (LAPV…CKAA), 224–244 (APWL…GAAV), 284–304 (IIIV…LSAV), 309–329 (LTGI…IAEM), and 342–362 (FVVA…PPFY).

This sequence belongs to the AbrB family.

The protein resides in the cell membrane. This is an uncharacterized protein from Bacillus subtilis (strain 168).